A 190-amino-acid chain; its full sequence is Protein shisa-like-2A (190 aa).

2 consecutive transmembrane segments (helical) span residues 48-68 (SFFP…LIGL) and 70-90 (VAAV…YLFI).

The protein belongs to the shisa family.

Its subcellular location is the membrane. The protein is Protein shisa-like-2A of Homo sapiens (Human).